The primary structure comprises 355 residues: NADH-quinone oxidoreductase subunit H (355 aa).

Helical transmembrane passes span 25 to 45 (LVRILVVAVVILLCVAYLILW), 91 to 111 (WLYLVAPVMTVVPAFAVWAVI), 126 to 146 (LLYAMAISSIGVYAVILAGWA), 170 to 190 (MGFALVLVLMTAGSLNLSEIV), 205 to 225 (FLSWNWLPLLPAFVVYFVSGI), 253 to 273 (MAFALFFLAEYINMIVISALA), 290 to 310 (FIPGIFWLVLKVFALLSVFIW), and 330 to 350 (VFLPVTVIWVVVVGFWMMSPL).

The protein belongs to the complex I subunit 1 family. NDH-1 is composed of 14 different subunits. Subunits NuoA, H, J, K, L, M, N constitute the membrane sector of the complex.

The protein resides in the cell inner membrane. The catalysed reaction is a quinone + NADH + 5 H(+)(in) = a quinol + NAD(+) + 4 H(+)(out). NDH-1 shuttles electrons from NADH, via FMN and iron-sulfur (Fe-S) centers, to quinones in the respiratory chain. The immediate electron acceptor for the enzyme in this species is believed to be ubiquinone. Couples the redox reaction to proton translocation (for every two electrons transferred, four hydrogen ions are translocated across the cytoplasmic membrane), and thus conserves the redox energy in a proton gradient. This subunit may bind ubiquinone. The polypeptide is NADH-quinone oxidoreductase subunit H (Burkholderia vietnamiensis (strain G4 / LMG 22486) (Burkholderia cepacia (strain R1808))).